A 596-amino-acid polypeptide reads, in one-letter code: Arginine--tRNA ligase (596 aa).

The 'HIGH' region signature appears at 127-137 (ANPTGPVHVGR).

This sequence belongs to the class-I aminoacyl-tRNA synthetase family.

Its subcellular location is the cytoplasm. The enzyme catalyses tRNA(Arg) + L-arginine + ATP = L-arginyl-tRNA(Arg) + AMP + diphosphate. The polypeptide is Arginine--tRNA ligase (Haloquadratum walsbyi (strain DSM 16790 / HBSQ001)).